A 360-amino-acid polypeptide reads, in one-letter code: Magnesium transporter NIPA2 (360 aa).

Topologically, residues 1 to 9 (MSQGHGKYD) are extracellular. The chain crosses the membrane as a helical span at residues 10 to 30 (FYIGLGLAMSSSIFIGGSFIL). Residues 31-56 (KKKGLLRLARKGSTRAGQGGHAYLKE) are Cytoplasmic-facing. The helical transmembrane segment at 57 to 77 (WLWWAGLLSMGAGEVANFAAY) threads the bilayer. A topological domain (extracellular) is located at residue alanine 78. The chain crosses the membrane as a helical span at residues 79–99 (FAPATLVTPLGALSVLVSAIL). Residues 100 to 107 (SSYFLNER) are Cytoplasmic-facing. Residues 108-128 (LNLHGKIGCLLSILGSTVMVI) traverse the membrane as a helical segment. The Extracellular segment spans residues 129 to 149 (HAPKEEEIETLNEMSHKLGDP). The helical transmembrane segment at 150 to 170 (GFVVFATLVVIVSLILIFVVG) threads the bilayer. Over 171-175 (PRHGQ) the chain is Cytoplasmic. A helical transmembrane segment spans residues 176–196 (TNILVYITICSVIGAVSVSCA). Residues 197–215 (KGLGIAIKELFAGKPVLQH) lie on the Extracellular side of the membrane. A helical membrane pass occupies residues 216 to 236 (PLTWILLLSLIVCVSTQINYL). The Cytoplasmic segment spans residues 237-246 (NRALDIFNTS). Residues 247–267 (IVTPIYYVFFTTSVITCSAIL) traverse the membrane as a helical segment. Over 268-278 (FKEWQDMPVDD) the chain is Extracellular. Residues 279–299 (VIGTLSGFFTIIVGIFLLHAF) form a helical membrane-spanning segment. Topologically, residues 300-360 (KDVSFSLSSL…SRRNGNLTAF (61 aa)) are cytoplasmic.

The protein belongs to the NIPA family.

The protein localises to the cell membrane. Its subcellular location is the early endosome. It catalyses the reaction Mg(2+)(in) = Mg(2+)(out). Functionally, acts as a selective Mg(2+) transporter. The chain is Magnesium transporter NIPA2 (NIPA2) from Bos taurus (Bovine).